We begin with the raw amino-acid sequence, 310 residues long: MAGAVSAVDQPLKIITGADDFGASLKDAMVTHLRSLGIDVEDTGVSSYYSAGSEVGRRVSASSSSEVRGLVCCGTGVGVAMFANKFPGVYAATCLSVEDAVNARSISNCNVLAFSGIKTSPETALEIFDAWIKTPFKSPCPASGSEPWSSVISSFLDNSLSEMSQIGKSTAGDSTTKKIDETTASCVICCLAKNREFTPVDIMPGGSMKIVRETPTSAIVRFKAGSVEPAHHHTFGHDLVVIKGKKSVWNLSKKERADLVDGDYLFTPAGDVHRVKYHEDTEFFITWDGHWDIFLDEDLETAKKAIEEEA.

Residue alanine 2 is modified to N-acetylalanine. Residues isoleucine 219–glutamate 282 form the Cupin type-2 domain.

The polypeptide is DNA damage-repair/toleration protein DRT102 (DRT102) (Arabidopsis thaliana (Mouse-ear cress)).